Consider the following 480-residue polypeptide: Lysostaphin (480 aa).

The N-terminal stretch at 1–23 (MKKTKNNYYTTPLAIGLSTFALA) is a signal peptide. Positions 24-234 (SIVYGGIQNE…ALVQNRTALR (211 aa)) are excised as a propeptide. 13 consecutive repeat copies span residues 49 to 61 (AEVE…VENT), 62 to 74 (AEVE…VENT), 75 to 87 (AEVE…VENT), 88 to 100 (AEVE…VENT), 101 to 113 (AEVE…VENT), 114 to 126 (AEVE…VENT), 127 to 139 (AEVE…VENT), 140 to 152 (AEVE…VENT), 153 to 165 (AEVE…VENT), 166 to 178 (AEVE…VENT), 179 to 191 (AEVE…VENT), 192 to 204 (AEVE…VENT), and 205 to 217 (AEVE…VENT). The interval 49–230 (AEVETSKPPV…ETSKALVQNR (182 aa)) is 14 X 13 AA tandem repeats of A-E-V-E-T-S-K-[AP]-P-V-E-N-T. Residues 51-219 (VETSKPPVEN…SKAPVENTAE (169 aa)) form a disordered region. The stretch at 218 to 230 (AEVETSKALVQNR) is one 14; approximate repeat. The Zn(2+) site is built by His-266 and Asp-270. Residue His-347 is part of the active site. His-349 contacts Zn(2+). An SH3b domain is found at 400–468 (SESASFTPNT…YLPVRTWNKS (69 aa)).

This sequence belongs to the peptidase M23B family. In terms of assembly, monomer. Zn(2+) serves as cofactor.

Its subcellular location is the secreted. The catalysed reaction is Hydrolysis of the -Gly-|-Gly- bond in the pentaglycine inter-peptide link joining staphylococcal cell wall peptidoglycans.. Functionally, lyses staphylococcal cells by hydrolyzing the polyglycine interpeptide bridges of the peptidoglycan. The polypeptide is Lysostaphin (lss) (Staphylococcus staphylolyticus).